Here is a 554-residue protein sequence, read N- to C-terminus: MAYYRTPHDVTALPAWQALKDHRQAMQDFSMREAFNADPQRFSQFTLSSCGLFLDYSKNLITSETRDLLVNLAKEVGLSDAIKSMITGELVNASEGRPALHTALRRPVGDKLSVNGVNVMPEVHKVLNQITELVGRIHDGLWRGYTEKPITDVVNIGIGGSFLGPELVSEALLSYAQKGVRCHYLANIDGSEFHELSAKIRAETTLFIVSSKSFNTLETLKNAQAARAWYLAQGGSEAELHRHFIAVSSNNAAAVAFGIREENIFPMWDWVGGRYSLWSAIGLPIALAIGMSNFKELLSGAYTMDQHFQSAPFEQNMPVLLALLGVWYGNFWGAQSHAILPYDHYLRNITKHLQQLDMESNGKSVRQDGTPVATDTGPVIWGGVGCNGQHAYHQLLHQGTQLIPADFIVPIVSFNPVADHHQWLYANCLSQSQALMLGKTRAEAESELREKGLSEAEIAKLAPHKVIPGNRPSNTLVVERISPRRLGALVALYEHKVFVQSVVWGINAFDQWGVELGKELGKGVYNRLVGSDETLADDASTQGLINYFRGRHRG.

Residue glutamate 359 is the Proton donor of the active site. Residues histidine 390 and lysine 518 contribute to the active site.

It belongs to the GPI family.

The protein localises to the cytoplasm. It catalyses the reaction alpha-D-glucose 6-phosphate = beta-D-fructose 6-phosphate. It functions in the pathway carbohydrate biosynthesis; gluconeogenesis. Its pathway is carbohydrate degradation; glycolysis; D-glyceraldehyde 3-phosphate and glycerone phosphate from D-glucose: step 2/4. In terms of biological role, catalyzes the reversible isomerization of glucose-6-phosphate to fructose-6-phosphate. This Pseudomonas fluorescens (strain ATCC BAA-477 / NRRL B-23932 / Pf-5) protein is Glucose-6-phosphate isomerase.